A 199-amino-acid polypeptide reads, in one-letter code: A-type ATP synthase subunit E (199 aa).

The protein belongs to the V-ATPase E subunit family. In terms of assembly, has multiple subunits with at least A(3), B(3), C, D, E, F, H, I and proteolipid K(x).

The protein resides in the cell membrane. In terms of biological role, component of the A-type ATP synthase that produces ATP from ADP in the presence of a proton gradient across the membrane. In Pyrococcus abyssi (strain GE5 / Orsay), this protein is A-type ATP synthase subunit E.